A 459-amino-acid polypeptide reads, in one-letter code: GTPase Der (459 aa).

2 EngA-type G domains span residues 3-167 (FTLA…PEPV) and 188-363 (IRVA…AVWN). Residues 9-16 (GRPNVGKS), 56-60 (DTAGL), 119-122 (NKSE), 194-201 (GRPNAGKS), 241-245 (DTAGL), and 306-309 (NKWD) each bind GTP. One can recognise a KH-like domain in the interval 364–448 (RRVPTAALNR…PVRITLREKA (85 aa)).

It belongs to the TRAFAC class TrmE-Era-EngA-EngB-Septin-like GTPase superfamily. EngA (Der) GTPase family. Associates with the 50S ribosomal subunit.

Functionally, GTPase that plays an essential role in the late steps of ribosome biogenesis. The protein is GTPase Der of Rhodopseudomonas palustris (strain TIE-1).